The sequence spans 589 residues: GTPase LSG1-2 (589 aa).

The segment at 1 to 26 (MGKSEKTSLGRSLVKHHNHMIQESKD) is disordered. Residues 158–366 (WRQLWRVLER…LCDCPGLVFP (209 aa)) enclose the CP-type G domain. The DARXP motif motif lies at 176-180 (DARDP). The segment at 206–209 (NKAD) is G4. 206–209 (NKAD) provides a ligand contact to GTP. The G5 stretch occupies residues 237–239 (AAT). Residues 315 to 322 (GYPNVGKS) form a G1 region. A GTP-binding site is contributed by 318 to 323 (NVGKSS). Residues 341-345 (GKTKH) are G2. The tract at residues 359 to 362 (DCPG) is G3. Gly-362 lines the GTP pocket. Positions 495–509 (GSESDDSAVGDETEN) are enriched in acidic residues. 2 disordered regions span residues 495-515 (GSESDDSAVGDETENEQVPGI) and 534-589 (SKKV…LTMR). Residues 534–541 (SKKVTAKK) carry the Nuclear localization signal motif. Residues 534–558 (SKKVTAKKQTASHKQHKKPQRKKDR) are compositionally biased toward basic residues. Over residues 580–589 (PANTGPLTMR) the composition is skewed to polar residues.

The protein belongs to the TRAFAC class YlqF/YawG GTPase family. Ubiquitous, with the highest expression in reproductive and strongly dividing tissues.

The protein resides in the cytoplasm. Its subcellular location is the nucleus. Functionally, GTPase involved in ribosome biogenesis. Binds to 23S rRNA and associates with 60S pre-ribosomes. Involved in early cotyledon and leaf development. This chain is GTPase LSG1-2, found in Arabidopsis thaliana (Mouse-ear cress).